Reading from the N-terminus, the 160-residue chain is Small ribosomal subunit protein uS9 (160 aa).

It belongs to the universal ribosomal protein uS9 family.

The sequence is that of Small ribosomal subunit protein uS9 from Bradyrhizobium sp. (strain ORS 278).